A 616-amino-acid chain; its full sequence is Dihydroxy-acid dehydratase (616 aa).

A Mg(2+)-binding site is contributed by D81. C122 is a [2Fe-2S] cluster binding site. D123 and K124 together coordinate Mg(2+). K124 carries the post-translational modification N6-carboxylysine. Residue C195 participates in [2Fe-2S] cluster binding. Position 491 (E491) interacts with Mg(2+). S517 functions as the Proton acceptor in the catalytic mechanism.

It belongs to the IlvD/Edd family. As to quaternary structure, homodimer. Requires [2Fe-2S] cluster as cofactor. Mg(2+) is required as a cofactor.

The enzyme catalyses (2R)-2,3-dihydroxy-3-methylbutanoate = 3-methyl-2-oxobutanoate + H2O. The catalysed reaction is (2R,3R)-2,3-dihydroxy-3-methylpentanoate = (S)-3-methyl-2-oxopentanoate + H2O. It participates in amino-acid biosynthesis; L-isoleucine biosynthesis; L-isoleucine from 2-oxobutanoate: step 3/4. It functions in the pathway amino-acid biosynthesis; L-valine biosynthesis; L-valine from pyruvate: step 3/4. Functions in the biosynthesis of branched-chain amino acids. Catalyzes the dehydration of (2R,3R)-2,3-dihydroxy-3-methylpentanoate (2,3-dihydroxy-3-methylvalerate) into 2-oxo-3-methylpentanoate (2-oxo-3-methylvalerate) and of (2R)-2,3-dihydroxy-3-methylbutanoate (2,3-dihydroxyisovalerate) into 2-oxo-3-methylbutanoate (2-oxoisovalerate), the penultimate precursor to L-isoleucine and L-valine, respectively. This is Dihydroxy-acid dehydratase from Erwinia tasmaniensis (strain DSM 17950 / CFBP 7177 / CIP 109463 / NCPPB 4357 / Et1/99).